A 143-amino-acid chain; its full sequence is Succinate dehydrogenase assembly factor 2, mitochondrial (143 aa).

The protein belongs to the SDHAF2 family. As to quaternary structure, interacts with the flavoprotein subunit within the SDH catalytic dimer.

Its subcellular location is the mitochondrion matrix. Its function is as follows. Plays an essential role in the assembly of succinate dehydrogenase (SDH), an enzyme complex (also referred to as respiratory complex II) that is a component of both the tricarboxylic acid (TCA) cycle and the mitochondrial electron transport chain, and which couples the oxidation of succinate to fumarate with the reduction of ubiquinone (coenzyme Q) to ubiquinol. Required for flavinylation (covalent attachment of FAD) of the flavoprotein subunit of the SDH catalytic dimer. The sequence is that of Succinate dehydrogenase assembly factor 2, mitochondrial from Schizosaccharomyces japonicus (strain yFS275 / FY16936) (Fission yeast).